The primary structure comprises 204 residues: uncharacterized protein (204 aa).

A run of 6 helical transmembrane segments spans residues threonine 19–leucine 39, alanine 42–alanine 62, glycine 78–isoleucine 98, proline 116–alanine 136, glycine 143–isoleucine 163, and alanine 167–valine 187.

Belongs to the acetate uptake transporter (AceTr) (TC 2.A.96) family.

It is found in the cell membrane. This is an uncharacterized protein from Methanothermobacter thermautotrophicus (strain ATCC 29096 / DSM 1053 / JCM 10044 / NBRC 100330 / Delta H) (Methanobacterium thermoautotrophicum).